The chain runs to 375 residues: Mitogen-activated protein kinase 1 (375 aa).

Positions 43-329 constitute a Protein kinase domain; the sequence is RPPIMPIGRG…VEEALAHPYL (287 aa). Residues 49–57 and Lys-72 contribute to the ATP site; that span reads IGRGAYGIV. The active-site Proton acceptor is the Asp-169. Thr-201 carries the post-translational modification Phosphothreonine. A TXY motif is present at residues 201 to 203; the sequence is TEY. At Tyr-203 the chain carries Phosphotyrosine. A Phosphothreonine modification is found at Thr-206.

Belongs to the protein kinase superfamily. CMGC Ser/Thr protein kinase family. MAP kinase subfamily. Mg(2+) serves as cofactor. In terms of processing, activated by wounding and UV-C in a cultivar-dependent manner; phosphorylated in cv. Pungchon but not in cv. Subicho.

It catalyses the reaction L-seryl-[protein] + ATP = O-phospho-L-seryl-[protein] + ADP + H(+). It carries out the reaction L-threonyl-[protein] + ATP = O-phospho-L-threonyl-[protein] + ADP + H(+). Activated by threonine and tyrosine phosphorylation. Its function is as follows. Stress-inducible protein kinase involved in oxidative stress-mediated and innate immune MAP kinase signaling cascades. The polypeptide is Mitogen-activated protein kinase 1 (Capsicum annuum (Capsicum pepper)).